The chain runs to 129 residues: uncharacterized protein (129 aa).

The interval proline 44–valine 63 is disordered. The span at arginine 46–arginine 58 shows a compositional bias: basic and acidic residues. 2 helical membrane-spanning segments follow: residues isoleucine 78–isoleucine 98 and alanine 109–phenylalanine 129.

The protein localises to the cell membrane. This is an uncharacterized protein from Bacillus subtilis (strain 168).